We begin with the raw amino-acid sequence, 519 residues long: Probable cytosol aminopeptidase (519 aa).

The Mn(2+) site is built by lysine 283 and aspartate 288. Residue lysine 295 is part of the active site. Mn(2+) is bound by residues aspartate 306, aspartate 365, and glutamate 367. The active site involves arginine 369.

This sequence belongs to the peptidase M17 family. Mn(2+) serves as cofactor.

Its subcellular location is the cytoplasm. It catalyses the reaction Release of an N-terminal amino acid, Xaa-|-Yaa-, in which Xaa is preferably Leu, but may be other amino acids including Pro although not Arg or Lys, and Yaa may be Pro. Amino acid amides and methyl esters are also readily hydrolyzed, but rates on arylamides are exceedingly low.. The enzyme catalyses Release of an N-terminal amino acid, preferentially leucine, but not glutamic or aspartic acids.. Functionally, presumably involved in the processing and regular turnover of intracellular proteins. Catalyzes the removal of unsubstituted N-terminal amino acids from various peptides. The protein is Probable cytosol aminopeptidase of Mycobacterium ulcerans (strain Agy99).